We begin with the raw amino-acid sequence, 83 residues long: Exodeoxyribonuclease 7 small subunit (83 aa).

It belongs to the XseB family. As to quaternary structure, heterooligomer composed of large and small subunits.

The protein resides in the cytoplasm. It catalyses the reaction Exonucleolytic cleavage in either 5'- to 3'- or 3'- to 5'-direction to yield nucleoside 5'-phosphates.. Bidirectionally degrades single-stranded DNA into large acid-insoluble oligonucleotides, which are then degraded further into small acid-soluble oligonucleotides. The polypeptide is Exodeoxyribonuclease 7 small subunit (Rhizobium etli (strain ATCC 51251 / DSM 11541 / JCM 21823 / NBRC 15573 / CFN 42)).